The primary structure comprises 308 residues: Sulfate adenylyltransferase subunit 2 (308 aa).

A disordered region spans residues 286–308; that stretch reads RQGRIIDHDGSASMEKKKQEGYF.

It belongs to the PAPS reductase family. CysD subfamily. In terms of assembly, heterodimer composed of CysD, the smaller subunit, and CysN.

The enzyme catalyses sulfate + ATP + H(+) = adenosine 5'-phosphosulfate + diphosphate. Its pathway is sulfur metabolism; hydrogen sulfide biosynthesis; sulfite from sulfate: step 1/3. With CysN forms the ATP sulfurylase (ATPS) that catalyzes the adenylation of sulfate producing adenosine 5'-phosphosulfate (APS) and diphosphate, the first enzymatic step in sulfur assimilation pathway. APS synthesis involves the formation of a high-energy phosphoric-sulfuric acid anhydride bond driven by GTP hydrolysis by CysN coupled to ATP hydrolysis by CysD. This is Sulfate adenylyltransferase subunit 2 from Nocardia farcinica (strain IFM 10152).